The following is a 543-amino-acid chain: CTP synthase (543 aa).

The amidoligase domain stretch occupies residues 1–265 (MTRYIFVTGG…DDIVVERFGL (265 aa)). Position 13 (serine 13) interacts with CTP. Serine 13 serves as a coordination point for UTP. Residues 14–19 (SLGKGI) and aspartate 71 contribute to the ATP site. Mg(2+)-binding residues include aspartate 71 and glutamate 139. Residues 146 to 148 (DIE), 186 to 191 (KTKPTQ), and lysine 222 each bind CTP. UTP-binding positions include 186 to 191 (KTKPTQ) and lysine 222. In terms of domain architecture, Glutamine amidotransferase type-1 spans 290–541 (TIAMVGKYME…VNAALAQKAR (252 aa)). Glycine 351 is a binding site for L-glutamine. Residue cysteine 378 is the Nucleophile; for glutamine hydrolysis of the active site. L-glutamine is bound by residues 379–382 (LGMQ), glutamate 402, and arginine 469. Catalysis depends on residues histidine 514 and glutamate 516.

The protein belongs to the CTP synthase family. Homotetramer.

It carries out the reaction UTP + L-glutamine + ATP + H2O = CTP + L-glutamate + ADP + phosphate + 2 H(+). The enzyme catalyses L-glutamine + H2O = L-glutamate + NH4(+). The catalysed reaction is UTP + NH4(+) + ATP = CTP + ADP + phosphate + 2 H(+). Its pathway is pyrimidine metabolism; CTP biosynthesis via de novo pathway; CTP from UDP: step 2/2. Allosterically activated by GTP, when glutamine is the substrate; GTP has no effect on the reaction when ammonia is the substrate. The allosteric effector GTP functions by stabilizing the protein conformation that binds the tetrahedral intermediate(s) formed during glutamine hydrolysis. Inhibited by the product CTP, via allosteric rather than competitive inhibition. Catalyzes the ATP-dependent amination of UTP to CTP with either L-glutamine or ammonia as the source of nitrogen. Regulates intracellular CTP levels through interactions with the four ribonucleotide triphosphates. The chain is CTP synthase from Azotobacter vinelandii (strain DJ / ATCC BAA-1303).